The following is a 1070-amino-acid chain: DNA-directed RNA polymerase subunit beta (1070 aa).

This sequence belongs to the RNA polymerase beta chain family. In terms of assembly, in plastids the minimal PEP RNA polymerase catalytic core is composed of four subunits: alpha, beta, beta', and beta''. When a (nuclear-encoded) sigma factor is associated with the core the holoenzyme is formed, which can initiate transcription.

It is found in the plastid. It localises to the chloroplast. The enzyme catalyses RNA(n) + a ribonucleoside 5'-triphosphate = RNA(n+1) + diphosphate. Functionally, DNA-dependent RNA polymerase catalyzes the transcription of DNA into RNA using the four ribonucleoside triphosphates as substrates. This Solanum lycopersicum (Tomato) protein is DNA-directed RNA polymerase subunit beta.